A 264-amino-acid chain; its full sequence is Signal peptidase I (264 aa).

Residues 1-18 are Cytoplasmic-facing; the sequence is MNRDNINSNKTVKQEFGS. A helical transmembrane segment spans residues 19–39; that stretch reads FAFVICIALVIRILIMEPFTV. The Extracellular portion of the chain corresponds to 40-264; it reads PTGSMKATIL…IFKNLYNVDE (225 aa). Catalysis depends on residues Ser43 and Lys106.

It belongs to the peptidase S26 family.

It is found in the cell membrane. It carries out the reaction Cleavage of hydrophobic, N-terminal signal or leader sequences from secreted and periplasmic proteins.. In Rickettsia prowazekii (strain Madrid E), this protein is Signal peptidase I (lepB).